Consider the following 376-residue polypeptide: Serpin B9 (376 aa).

At Met-1 the chain carries N-acetylmethionine.

It belongs to the serpin family. Ov-serpin subfamily.

It localises to the cytoplasm. Its function is as follows. Granzyme B inhibitor. This Homo sapiens (Human) protein is Serpin B9 (SERPINB9).